Here is a 169-residue protein sequence, read N- to C-terminus: MSPGIGMPELLVVLVLALVVVGPQQLPVMMRKVGQMMAQARAMAKDFQNSFEEIGRETELSELRREIDALKQANPINQIHGELDKAARGTQDDDIRALKLKHVEQNQAETDADKAAKAAKLAALDSEGPQSTTPEADARADAAASADETERAAPVETTPAKPVDEIKGR.

Residues 2–22 traverse the membrane as a helical segment; that stretch reads SPGIGMPELLVVLVLALVVVG. A disordered region spans residues 106 to 169; the sequence is NQAETDADKA…AKPVDEIKGR (64 aa).

Belongs to the TatB family. The Tat system comprises two distinct complexes: a TatABC complex, containing multiple copies of TatA, TatB and TatC subunits, and a separate TatA complex, containing only TatA subunits. Substrates initially bind to the TatABC complex, which probably triggers association of the separate TatA complex to form the active translocon.

It localises to the cell inner membrane. In terms of biological role, part of the twin-arginine translocation (Tat) system that transports large folded proteins containing a characteristic twin-arginine motif in their signal peptide across membranes. Together with TatC, TatB is part of a receptor directly interacting with Tat signal peptides. TatB may form an oligomeric binding site that transiently accommodates folded Tat precursor proteins before their translocation. The chain is Sec-independent protein translocase protein TatB from Maricaulis maris (strain MCS10) (Caulobacter maris).